The chain runs to 626 residues: DNA mismatch repair protein MutL (626 aa).

Belongs to the DNA mismatch repair MutL/HexB family.

Its function is as follows. This protein is involved in the repair of mismatches in DNA. It is required for dam-dependent methyl-directed DNA mismatch repair. May act as a 'molecular matchmaker', a protein that promotes the formation of a stable complex between two or more DNA-binding proteins in an ATP-dependent manner without itself being part of a final effector complex. This chain is DNA mismatch repair protein MutL, found in Pelodictyon phaeoclathratiforme (strain DSM 5477 / BU-1).